Consider the following 732-residue polypeptide: Acylamino-acid-releasing enzyme (732 aa).

A Blocked amino end (Met); alternate modification is found at methionine 1. At methionine 1 the chain carries N-acetylmethionine; alternate. A phosphoserine mark is found at serine 185 and serine 187. Active-site charge relay system residues include serine 587, aspartate 675, and histidine 707.

Belongs to the peptidase S9C family. In terms of assembly, homotetramer.

The protein localises to the cytoplasm. The enzyme catalyses Cleavage of an N-acetyl or N-formyl amino acid from the N-terminus of a polypeptide.. With respect to regulation, homotetramerization is required for activity. Tetramerization results in the formation of a gated channel which is involved in substrate selection and substrate access to the catalytic sites. This enzyme catalyzes the hydrolysis of the N-terminal peptide bond of an N-acetylated peptide to generate an N-acetylated amino acid and a peptide with a free N-terminus. It preferentially cleaves off Ac-Ala, Ac-Met and Ac-Ser. Also, involved in the degradation of oxidized and glycated proteins. The polypeptide is Acylamino-acid-releasing enzyme (Apeh) (Rattus norvegicus (Rat)).